Consider the following 207-residue polypeptide: Large ribosomal subunit protein uL4 (207 aa).

Residues 62-85 form a disordered region; sequence KKPFKQKGTGQARQGCRRAPQYPG.

This sequence belongs to the universal ribosomal protein uL4 family. As to quaternary structure, part of the 50S ribosomal subunit.

Functionally, one of the primary rRNA binding proteins, this protein initially binds near the 5'-end of the 23S rRNA. It is important during the early stages of 50S assembly. It makes multiple contacts with different domains of the 23S rRNA in the assembled 50S subunit and ribosome. Forms part of the polypeptide exit tunnel. In Geobacter sp. (strain M21), this protein is Large ribosomal subunit protein uL4.